Here is a 600-residue protein sequence, read N- to C-terminus: Aspartate--tRNA(Asp/Asn) ligase (600 aa).

Residue glutamate 181 participates in L-aspartate binding. Residues 205–208 form an aspartate region; it reads QQYK. Residue arginine 227 coordinates L-aspartate. Residues 227–229 and glutamine 236 each bind ATP; that span reads RDE. Histidine 455 contacts L-aspartate. Residue glutamate 490 participates in ATP binding. Arginine 497 contacts L-aspartate. 542-545 is an ATP binding site; it reads GLDR.

This sequence belongs to the class-II aminoacyl-tRNA synthetase family. Type 1 subfamily. As to quaternary structure, homodimer.

The protein localises to the cytoplasm. The enzyme catalyses tRNA(Asx) + L-aspartate + ATP = L-aspartyl-tRNA(Asx) + AMP + diphosphate. Aspartyl-tRNA synthetase with relaxed tRNA specificity since it is able to aspartylate not only its cognate tRNA(Asp) but also tRNA(Asn). Reaction proceeds in two steps: L-aspartate is first activated by ATP to form Asp-AMP and then transferred to the acceptor end of tRNA(Asp/Asn). In Methylacidiphilum infernorum (isolate V4) (Methylokorus infernorum (strain V4)), this protein is Aspartate--tRNA(Asp/Asn) ligase.